The sequence spans 309 residues: Dicarboxylate carrier UCP2 (309 aa).

Residues M1 to K16 lie on the Mitochondrial intermembrane side of the membrane. Solcar repeat units lie at residues P11 to F106, A114 to T203, and D212 to A297. Residues K16–L63 form an important for interaction with long-chain fatty acids region. A helical membrane pass occupies residues F17 to R40. Topologically, residues L41–S77 are mitochondrial matrix. A helical transmembrane segment spans residues L78–V103. Topologically, residues K104 to R119 are mitochondrial intermembrane. Residues L120–Q145 form a helical membrane-spanning segment. Topologically, residues A146–R173 are mitochondrial matrix. Residues G174–L199 form a helical membrane-spanning segment. At I200–H217 the chain is on the mitochondrial intermembrane side. A helical transmembrane segment spans residues F218–Y242. The Mitochondrial matrix portion of the chain corresponds to M243 to A268. Residues F269–L294 traverse the membrane as a helical segment. An important for interaction with long-chain fatty acids region spans residues L278–V285. Residues K295–F309 are Mitochondrial intermembrane-facing.

This sequence belongs to the mitochondrial carrier (TC 2.A.29) family. Homotetramer. Adopts an asymmetrical dimer of dimers functional form. Interacts with MICU1 (when methylated); leading to decrease the calcium sensitivity of MICU1. Widely expressed. Highest in spleen, lung, white and brown adipose tissues. 4-6 times higher levels are detected in white adipose tissue of ob/ob and db/db mice when compared to lean littermates. Expressed in neurons of the ventromedial nucleus of the hypothalamus (at protein level). Expressed in thymocytes (at protein level).

The protein resides in the mitochondrion inner membrane. The catalysed reaction is L-aspartate(out) + phosphate(in) + H(+)(in) = L-aspartate(in) + phosphate(out) + H(+)(out). It catalyses the reaction oxaloacetate(out) + phosphate(in) + H(+)(in) = oxaloacetate(in) + phosphate(out) + H(+)(out). The enzyme catalyses (S)-malate(out) + phosphate(in) + H(+)(in) = (S)-malate(in) + phosphate(out) + H(+)(out). It carries out the reaction malonate(out) + phosphate(in) + H(+)(in) = malonate(in) + phosphate(out) + H(+)(out). The catalysed reaction is sulfate(out) + phosphate(in) + H(+)(in) = sulfate(in) + phosphate(out) + H(+)(out). It catalyses the reaction (S)-malate(out) = (S)-malate(in). The enzyme catalyses L-aspartate(out) = L-aspartate(in). It carries out the reaction phosphate(in) = phosphate(out). The catalysed reaction is chloride(in) = chloride(out). It catalyses the reaction H(+)(in) = H(+)(out). The enzyme catalyses a long-chain fatty acid(out) = a long-chain fatty acid(in). Proton conductance is activated by free long-chain fatty acids and allosterically inhibited by purine nucleotides. Could be constitutively inhibited by GDP. Antiporter that exports dicarboxylate intermediates of the Krebs cycle in exchange for phosphate plus a proton across the inner membrane of mitochondria, a process driven by mitochondrial motive force with an overall impact on glycolysis, glutaminolysis and glutathione-dependent redox balance. Continuous export of oxaloacetate and related four-carbon dicarboxylates from mitochondrial matrix into the cytosol negatively regulates the oxidation of acetyl-CoA substrates via the Krebs cycle lowering the ATP/ADP ratio and reactive oxygen species (ROS) production. May mediate inducible proton entry into the mitochondrial matrix affecting ATP turnover as a protection mechanism against oxidative stress. The proton currents are most likely associated with fatty acid flipping across the inner membrane of mitochondria in a metabolic process regulated by free fatty acids and purine nucleotides. Regulates the use of glucose as a source of energy. Required for glucose-induced DRP1-dependent mitochondrial fission and neuron activation in the ventromedial nucleus of the hypothalamus (VMH). This mitochondrial adaptation mechanism modulates the VMH pool of glucose-excited neurons with an impact on systemic glucose homeostasis. Regulates ROS levels and metabolic reprogramming of macrophages during the resolution phase of inflammation. Attenuates ROS production in response to IL33 to preserve the integrity of the Krebs cycle required for persistent production of itaconate and subsequent GATA3-dependent differentiation of inflammation-resolving alternatively activated macrophages. Can unidirectionally transport anions including L-malate, L-aspartate, phosphate and chloride ions. Does not mediate adaptive thermogenesis. The polypeptide is Dicarboxylate carrier UCP2 (Ucp2) (Mus musculus (Mouse)).